Here is a 514-residue protein sequence, read N- to C-terminus: Protein phosphatase 1H (514 aa).

Ser-7 bears the Phosphoserine mark. Residues 77-507 (ATGYAEVINA…DDISVYVIPL (431 aa)) form the PPM-type phosphatase domain. The interval 109 to 135 (AVTSTPNRNSSKRRSSLPNGEGLQLKE) is disordered. Thr-113 bears the Phosphothreonine mark. Phosphoserine occurs at positions 124 and 211. Omega-N-methylarginine is present on Arg-213. Ser-221 bears the Phosphoserine mark. A Phosphothreonine modification is found at Thr-224. Position 422 is a phosphoserine (Ser-422).

Belongs to the PP2C family.

Its subcellular location is the nucleus. It localises to the cytoplasm. It catalyses the reaction O-phospho-L-seryl-[protein] + H2O = L-seryl-[protein] + phosphate. The enzyme catalyses O-phospho-L-threonyl-[protein] + H2O = L-threonyl-[protein] + phosphate. Dephosphorylates CDKN1B at 'Thr-187', thus removing a signal for proteasomal degradation. This Homo sapiens (Human) protein is Protein phosphatase 1H (PPM1H).